The primary structure comprises 314 residues: tRNA(Ile)-lysidine synthase (314 aa).

An ATP-binding site is contributed by 37–42 (SGGPDS).

This sequence belongs to the tRNA(Ile)-lysidine synthase family.

The protein resides in the cytoplasm. It carries out the reaction cytidine(34) in tRNA(Ile2) + L-lysine + ATP = lysidine(34) in tRNA(Ile2) + AMP + diphosphate + H(+). Its function is as follows. Ligates lysine onto the cytidine present at position 34 of the AUA codon-specific tRNA(Ile) that contains the anticodon CAU, in an ATP-dependent manner. Cytidine is converted to lysidine, thus changing the amino acid specificity of the tRNA from methionine to isoleucine. This chain is tRNA(Ile)-lysidine synthase, found in Corynebacterium glutamicum (strain ATCC 13032 / DSM 20300 / JCM 1318 / BCRC 11384 / CCUG 27702 / LMG 3730 / NBRC 12168 / NCIMB 10025 / NRRL B-2784 / 534).